We begin with the raw amino-acid sequence, 271 residues long: Urease accessory protein UreD (271 aa).

Belongs to the UreD family. In terms of assembly, ureD, UreF and UreG form a complex that acts as a GTP-hydrolysis-dependent molecular chaperone, activating the urease apoprotein by helping to assemble the nickel containing metallocenter of UreC. The UreE protein probably delivers the nickel.

It is found in the cytoplasm. Functionally, required for maturation of urease via the functional incorporation of the urease nickel metallocenter. The protein is Urease accessory protein UreD of Actinomyces naeslundii.